We begin with the raw amino-acid sequence, 720 residues long: Transcriptional regulator EFH1 (720 aa).

Composition is skewed to polar residues over residues 1-15 (MNGI…NFYN) and 22-35 (PSSS…SSQD). Disordered regions lie at residues 1–111 (MNGI…SSST), 181–223 (SFQM…HQSQ), 245–336 (QKEF…TIAT), and 365–437 (YQRQ…PQPD). A compositionally biased stretch (low complexity) spans 71 to 105 (QQNQSESQQSRQSHHLQQQQQQQQQQQQNQHNQQN). The span at 181-200 (SFQMGSVSTPDTQNSSIRSK) shows a compositional bias: polar residues. Residues 201 to 223 (QQQQHSYQQQQPQQLSQSQHQSQ) are compositionally biased toward low complexity. Positions 254 to 266 (GDQTLVPQTNSKL) are enriched in polar residues. Positions 267 to 304 (QQQISETSYSQQQQQQQSPPTPQKQQQQQHYQHQTTQP) are enriched in low complexity. Over residues 313-336 (YSQTGGPSSSPVAGNISIPTTIAT) the composition is skewed to polar residues. Positions 366 to 399 (QRQQQQQQQHQQPQSQQMSQISQLSQQIPPQGSS) are enriched in low complexity. Residues 400–413 (KNISINSTPTKSRA) show a composition bias toward polar residues. Over residues 414-433 (SSITTRSGRQSRSTSISSFI) the composition is skewed to low complexity. Residues 446 to 552 (KVATTRWDDE…KNIKQYFLTK (107 aa)) form the HTH APSES-type domain. The segment at residues 480-501 (GTKLLNVIGMTRGKRDGILKTE) is a DNA-binding region (H-T-H motif). Over residues 569-582 (GMTRQREEVRREGR) the composition is skewed to basic and acidic residues. The disordered stretch occupies residues 569–662 (GMTRQREEVR…KNSESKLLET (94 aa)). The segment covering 613-644 (VPGDDEEEEDDDDDDDDDEEEGEQDDEEEEDG) has biased composition (acidic residues). Over residues 645–654 (SSTSMSSSKN) the composition is skewed to low complexity.

This sequence belongs to the EFG1/PHD1/stuA family.

It localises to the nucleus. Its function is as follows. Transcription factor that regulates filamentous growth through repression of EFG1. Regulates the level of colonizing fungi, favoring commensalism as opposed to candidiasis. This chain is Transcriptional regulator EFH1 (EFH1), found in Candida albicans (strain SC5314 / ATCC MYA-2876) (Yeast).